We begin with the raw amino-acid sequence, 1242 residues long: Structural polyprotein (1242 aa).

Residues 1-36 (MFPYPTLNYPPMAPVNPMAYRDPNPPRRRWRPFRPP) are necessary for nucleocapsid assembly and virus assembly. The disordered stretch occupies residues 1–104 (MFPYPTLNYP…KQKPGKRQRM (104 aa)). The interval 37 to 70 (LAAQIEDLRRSIANLTFKQRAPNPPAGPPAKRKK) is host transcription inhibition. The Supraphysiological nuclear export signal motif lies at 44 to 51 (LRRSIANL). A compositionally biased stretch (basic residues) spans 66–104 (AKRKKPAPKPKPAAPKKKRQPPPAKKQKRKQKPGKRQRM). Positions 67-70 (KRKK) match the Nuclear localization signal motif. The segment at 83-113 (KRQPPPAKKQKRKQKPGKRQRMCMKLESDKT) is binding to the viral RNA. Positions 98 to 112 (PGKRQRMCMKLESDK) are ribosome-binding. Ser110 bears the Phosphoserine mark. Residues 112-261 (KTFPIMLNGQ…KDTPEGSEPW (150 aa)) enclose the Peptidase S3 domain. At Thr113 the chain carries Phosphothreonine. Catalysis depends on charge relay system residues His138, Asp160, and Ser212. The interval 262–273 (SLTTVMCVLANI) is functions as an uncleaved signal peptide for the precursor of protein E3/E2. The N-linked (GlcNAc...) asparagine; by host glycan is linked to Asn272. Residues 325 to 688 (DLETHFTQYK…YYYNRYPMTT (364 aa)) lie on the Extracellular side of the membrane. A helical membrane pass occupies residues 689–709 (VIGLCTCVAIIMVSCVTSVWL). Topologically, residues 710 to 744 (LCRTRNLCITPYRLAPNAQVPILLAVLCCVKPTRA) are cytoplasmic. 3 S-palmitoyl cysteine; by host lipidation sites follow: Cys717, Cys737, and Cys738. The tract at residues 717–737 (CITPYRLAPNAQVPILLAVLC) is transient transmembrane before p62-6K protein processing. Residues 745-759 (DDTLQVLNYLWNNNQ) lie on the Extracellular side of the membrane. 2 consecutive transmembrane segments (helical) span residues 760–780 (NFFWMQTLIPLAALIVCMRML) and 781–801 (RCLLCCGPAFLLVCGALGAAA). Residues 802–1218 (YEHAAVMPNK…WSWLKVLVGS (417 aa)) are Extracellular-facing. Intrachain disulfides connect Cys850/Cys915, Cys863/Cys895, Cys864/Cys897, Cys869/Cys879, Cys1061/Cys1073, Cys1103/Cys1178, Cys1108/Cys1182, and Cys1130/Cys1172. The E1 fusion peptide loop stretch occupies residues 885–902 (VYPFMWGGAYCFCDTENT). The helical transmembrane segment at 1219–1239 (TSAFIVLGLIATAVVALVLFT) threads the bilayer. At 1240-1242 (HRH) the chain is on the cytoplasmic side.

As to quaternary structure, part of a tetrameric complex composed of host CRM1, host importin alpha/beta dimer and the viral capsid; this complex blocks the receptor-mediated transport through the nuclear pore. Interacts with host phosphatase PPP1CA; this interaction dephosphorylates the capsid protein, which increases its ability to bind to the viral genome. Interacts with host karyopherin KPNA4; this interaction allows the nuclear import of the viral capsid protein. Interacts with spike glycoprotein E2. Interacts with host IRAK1; the interaction leads to inhibition of IRAK1-dependent signaling. In terms of assembly, the precursor of protein E3/E2 and E1 form a heterodimer shortly after synthesis. The precursor of protein E3/E2 and E1 form a heterodimer shortly after synthesis. Processing of the precursor of protein E3/E2 into E2 and E3 results in a heterodimer of the spike glycoproteins E2 and E1. Spike at virion surface are constituted of three E2-E1 heterodimers. After target cell attachment and endocytosis, E1 change conformation to form homotrimers. Interacts with 6K protein. As to quaternary structure, processing of the precursor of protein E3/E2 into E2 and E3 results in a heterodimer of the spike glycoproteins E2 and E1. Spike at virion surface are constituted of three E2-E1 heterodimers. Interacts with 6K protein. In terms of assembly, interacts with spike glycoprotein E1. Interacts with spike glycoprotein E2. Structural polyprotein: Specific enzymatic cleavages in vivo yield mature proteins. Capsid protein is auto-cleaved during polyprotein translation, unmasking a signal peptide at the N-terminus of the precursor of E3/E2. The remaining polyprotein is then targeted to the host endoplasmic reticulum, where host signal peptidase cleaves it into pE2, 6K and E1 proteins. pE2 is further processed to mature E3 and E2 by host furin in trans-Golgi vesicle. Post-translationally, phosphorylated on serine and threonine residues. In terms of processing, palmitoylated via thioester bonds. These palmitoylations may induce disruption of the C-terminus transmembrane. This would result in the reorientation of E2 C-terminus from lumenal to cytoplasmic side. N-glycosylated. Post-translationally, palmitoylated via thioester bonds.

Its subcellular location is the virion. The protein resides in the host cytoplasm. It localises to the host cell membrane. The protein localises to the host nucleus. It is found in the virion membrane. The catalysed reaction is Autocatalytic release of the core protein from the N-terminus of the togavirus structural polyprotein by hydrolysis of a -Trp-|-Ser- bond.. Functionally, forms an icosahedral capsid with a T=4 symmetry composed of 240 copies of the capsid protein surrounded by a lipid membrane through which penetrate 80 spikes composed of trimers of E1-E2 heterodimers. The capsid protein binds to the viral RNA genome at a site adjacent to a ribosome binding site for viral genome translation following genome release. Possesses a protease activity that results in its autocatalytic cleavage from the nascent structural protein. Following its self-cleavage, the capsid protein transiently associates with ribosomes, and within several minutes the protein binds to viral RNA and rapidly assembles into icosahedric core particles. The resulting nucleocapsid eventually associates with the cytoplasmic domain of the spike glycoprotein E2 at the cell membrane, leading to budding and formation of mature virions. In case of infection, new virions attach to target cells and after clathrin-mediated endocytosis their membrane fuses with the host endosomal membrane. This leads to the release of the nucleocapsid into the cytoplasm, followed by an uncoating event necessary for the genomic RNA to become accessible. The uncoating might be triggered by the interaction of capsid proteins with ribosomes. Binding of ribosomes would release the genomic RNA since the same region is genomic RNA-binding and ribosome-binding. Specifically inhibits interleukin-1 receptor-associated kinase 1/IRAK1-dependent signaling during viral entry, representing a means by which the alphaviruses may evade innate immune detection and activation prior to viral gene expression. Inhibits host transcription. Forms a tetrameric complex with XPO1/CRM1 and the nuclear import receptor importin. This complex blocks the central channel of host nuclear pores thereby inhibiting the receptor-mediated nuclear transport and thus the host mRNA and rRNA transcription. The inhibition of transcription is linked to a cytopathic effect on the host cell. Provides the signal sequence for the translocation of the precursor of protein E3/E2 to the host endoplasmic reticulum. Furin-cleaved E3 remains associated with spike glycoprotein E1 and mediates pH protection of the latter during the transport via the secretory pathway. After virion release from the host cell, the assembly protein E3 is gradually released in the extracellular space. Its function is as follows. Plays a role in viral attachment to target host cell, by binding to the cell receptor. Synthesized as a p62 precursor which is processed by furin at the cell membrane just before virion budding, giving rise to E2-E1 heterodimer. The p62-E1 heterodimer is stable, whereas E2-E1 is unstable and dissociate at low pH. p62 is processed at the last step, presumably to avoid E1 fusion activation before its final export to cell surface. E2 C-terminus contains a transitory transmembrane that would be disrupted by palmitoylation, resulting in reorientation of the C-terminal tail from lumenal to cytoplasmic side. This step is critical since E2 C-terminus is involved in budding by interacting with capsid proteins. This release of E2 C-terminus in cytoplasm occurs lately in protein export, and precludes premature assembly of particles at the endoplasmic reticulum membrane. In terms of biological role, constitutive membrane protein involved in virus glycoprotein processing, cell permeabilization, and the budding of viral particles. Disrupts the calcium homeostasis of the cell, probably at the endoplasmic reticulum level. This leads to cytoplasmic calcium elevation. Because of its lipophilic properties, the 6K protein is postulated to influence the selection of lipids that interact with the transmembrane domains of the glycoproteins, which, in turn, affects the deformability of the bilayer required for the extreme curvature that occurs as budding proceeds. Present in low amount in virions, about 3% compared to viral glycoproteins. Functionally, class II viral fusion protein. Fusion activity is inactive as long as E1 is bound to E2 in mature virion. After virus attachment to target cell and endocytosis, acidification of the endosome would induce dissociation of E1/E2 heterodimer and concomitant trimerization of the E1 subunits. This E1 trimer is fusion active, and promotes release of viral nucleocapsid in cytoplasm after endosome and viral membrane fusion. Efficient fusion requires the presence of cholesterol and sphingolipid in the target membrane. Fusion is optimal at levels of about 1 molecule of cholesterol per 2 molecules of phospholipids, and is specific for sterols containing a 3-beta-hydroxyl group. The polypeptide is Structural polyprotein (Aedes (Human)).